The sequence spans 494 residues: UPF0371 protein SPy_1343/M5005_Spy1095 (494 aa).

This sequence belongs to the UPF0371 family.

The polypeptide is UPF0371 protein SPy_1343/M5005_Spy1095 (Streptococcus pyogenes serotype M1).